The sequence spans 511 residues: 2-isopropylmalate synthase (511 aa).

The Pyruvate carboxyltransferase domain occupies 4–266 (IDIFDTTLRD…ETGIQLQEIK (263 aa)). Mn(2+) is bound by residues Asp-13, His-201, His-203, and Asn-237. Residues 392–511 (ELKMVQVQYG…IKESLRAHPV (120 aa)) form a regulatory domain region.

This sequence belongs to the alpha-IPM synthase/homocitrate synthase family. LeuA type 1 subfamily. As to quaternary structure, homodimer. It depends on Mn(2+) as a cofactor.

The protein resides in the cytoplasm. The catalysed reaction is 3-methyl-2-oxobutanoate + acetyl-CoA + H2O = (2S)-2-isopropylmalate + CoA + H(+). The protein operates within amino-acid biosynthesis; L-leucine biosynthesis; L-leucine from 3-methyl-2-oxobutanoate: step 1/4. Functionally, catalyzes the condensation of the acetyl group of acetyl-CoA with 3-methyl-2-oxobutanoate (2-ketoisovalerate) to form 3-carboxy-3-hydroxy-4-methylpentanoate (2-isopropylmalate). This Lysinibacillus sphaericus (strain C3-41) protein is 2-isopropylmalate synthase.